Consider the following 205-residue polypeptide: MSNEYDYLFKLLLIGDSSVGKSCLLLRFADDAYIDSYISTIGVDFKIRTIEQDGKTIKLQIWDTAGQERFRTITSSYYRGAHGIIIVYDCTEMESFNNVKQWLSEIDRYANESVCKLLIGNKNDMVESKVVSTETGRALADELGIPFLETSAKDSINVEQAFLTIAGEIKKKMGSQTNANKTSGPGTVQMKGQPIQQNNGGCCGQ.

N-acetylserine is present on serine 2. GTP contacts are provided by residues 15 to 23 (GDSSVGKSC), 33 to 40 (YIDSYIST), 63 to 67 (DTAGQ), 121 to 124 (NKND), and 151 to 153 (SAK). The Effector region motif lies at 37 to 45 (YISTIGVDF). 2 stretches are compositionally biased toward polar residues: residues 174–186 (GSQTNANKTSGPG) and 194–205 (PIQQNNGGCCGQ). The interval 174-205 (GSQTNANKTSGPGTVQMKGQPIQQNNGGCCGQ) is disordered. S-geranylgeranyl cysteine attachment occurs at residues cysteine 202 and cysteine 203.

Belongs to the small GTPase superfamily. Rab family. As to quaternary structure, does not interact with GC5. Interacts with XI-2/MYA2.

It localises to the golgi apparatus. It is found in the trans-Golgi network membrane. Its subcellular location is the golgi apparatus membrane. Functionally, protein transport. Regulator of membrane traffic from the Golgi apparatus towards the endoplasmic reticulum (ER). This chain is Ras-related protein RABD1 (RABD1), found in Arabidopsis thaliana (Mouse-ear cress).